The chain runs to 110 residues: UPF0235 protein Mpop_2087 (110 aa).

The protein belongs to the UPF0235 family.

This chain is UPF0235 protein Mpop_2087, found in Methylorubrum populi (strain ATCC BAA-705 / NCIMB 13946 / BJ001) (Methylobacterium populi).